Here is a 138-residue protein sequence, read N- to C-terminus: Translation initiation factor 2 subunit beta (138 aa).

It belongs to the eIF-2-beta/eIF-5 family. Heterotrimer composed of an alpha, a beta and a gamma chain.

EIF-2 functions in the early steps of protein synthesis by forming a ternary complex with GTP and initiator tRNA. The sequence is that of Translation initiation factor 2 subunit beta from Methanopyrus kandleri (strain AV19 / DSM 6324 / JCM 9639 / NBRC 100938).